The primary structure comprises 144 residues: CYFQNCPRGGKRALSDTELRQCLPCGPGGQGRCFGPSICCADALGCFVGTAEALRCQEENYLPSPCQSGQKPCGSGGRCAANGVCCNDESCVIEPECREEFHRPVRAGDRSNVTQLDGPAGALLLRLMQLAGAPEPQPAAPGGY.

Residues C1 and C6 are joined by a disulfide bond. G9 is subject to Glycine amide. 7 disulfide bridges follow: C22–C66, C25–C39, C33–C56, C40–C46, C73–C85, C79–C97, and C86–C91. N112 carries N-linked (GlcNAc...) asparagine glycosylation.

It belongs to the vasopressin/oxytocin family. Interacts with vasopressin receptors V1bR/AVPR1B (Ki=85 pM), V1aR/AVPR1A (Ki=0.6 nM) and V2R/AVPR2 (Ki=4.9 nM). Interacts with oxytocin receptor (OXTR) (Ki=110 nM).

Its subcellular location is the secreted. Neurophysin 2 specifically binds vasopressin. In terms of biological role, vasopressin has a direct antidiuretic action on the kidney, it also causes vasoconstriction of the peripheral vessels. Acts by binding to vasopressin receptors (V1bR/AVPR1B, V1aR/AVPR1A, and V2R/AVPR2). This is Vasopressin-neurophysin 2-copeptin (AVP) from Cavia porcellus (Guinea pig).